The chain runs to 597 residues: Fructan 1-exohydrolase (597 aa).

The first 15 residues, 1–15, serve as a signal peptide directing secretion; sequence MAQAWAFLLPVLVFG. Aspartate 76 is a catalytic residue. 3 N-linked (GlcNAc...) asparagine glycosylation sites follow: asparagine 169, asparagine 237, and asparagine 249. Cysteines 447 and 493 form a disulfide. A glycan (N-linked (GlcNAc...) asparagine) is linked at asparagine 568.

This sequence belongs to the glycosyl hydrolase 32 family.

It catalyses the reaction Hydrolysis of terminal, non-reducing (2-&gt;1)-linked beta-D-fructofuranose residues in fructans.. Inhibited by sucrose. Functionally, hydrolyzes inulin-type beta-(2,1)-fructans. May play a role as a beta-(2,1)-trimmer during graminan biosynthesis. The protein is Fructan 1-exohydrolase of Triticum urartu (Red wild einkorn).